We begin with the raw amino-acid sequence, 350 residues long: SUMO-activating enzyme subunit 1 (350 aa).

Residue methionine 1 is modified to N-acetylmethionine. The residue at position 2 (valine 2) is an N-acetylvaline; in SUMO-activating enzyme subunit 1, N-terminally processed. Serine 16 carries the phosphoserine modification. Lysine 202 is subject to N6-acetyllysine.

The protein belongs to the ubiquitin-activating E1 family. Heterodimer of SAE1 and UBA2/SAE2. The heterodimer corresponds to the two domains that are encoded on a single polypeptide chain in ubiquitin-activating enzyme E1. Interacts with UBE2I. As to expression, broadly expressed, with highest levels in testis.

It localises to the nucleus. It functions in the pathway protein modification; protein sumoylation. In terms of biological role, the heterodimer acts as an E1 ligase for SUMO1, SUMO2, SUMO3, and probably SUMO4. It mediates ATP-dependent activation of SUMO proteins followed by formation of a thioester bond between a SUMO protein and a conserved active site cysteine residue on UBA2/SAE2. The polypeptide is SUMO-activating enzyme subunit 1 (Sae1) (Mus musculus (Mouse)).